We begin with the raw amino-acid sequence, 241 residues long: Sensory transduction protein LytT (241 aa).

The Response regulatory domain maps to 3-117 (RVLIVDDEML…RIQQTLKKYK (115 aa)). D54 is modified (4-aspartylphosphate). The 105-residue stretch at 137–241 (LALSVGESIV…AKELKKLLHI (105 aa)) folds into the HTH LytTR-type domain.

In terms of processing, phosphorylated by LytS.

It localises to the cytoplasm. Functionally, member of the two-component regulatory system LytS/LytT that probably regulates genes involved in cell wall metabolism. The chain is Sensory transduction protein LytT (lytT) from Bacillus subtilis (strain 168).